We begin with the raw amino-acid sequence, 306 residues long: tRNA pseudouridine synthase B (306 aa).

The Nucleophile role is filled by D51.

This sequence belongs to the pseudouridine synthase TruB family. Type 1 subfamily.

It catalyses the reaction uridine(55) in tRNA = pseudouridine(55) in tRNA. Responsible for synthesis of pseudouridine from uracil-55 in the psi GC loop of transfer RNAs. The chain is tRNA pseudouridine synthase B from Nocardia farcinica (strain IFM 10152).